The primary structure comprises 157 residues: SsrA-binding protein (157 aa).

Residues 133–157 form a disordered region; that stretch reads LHDKRESEKKRDWGREKGRLLRARG. A compositionally biased stretch (basic and acidic residues) spans 135-151; the sequence is DKRESEKKRDWGREKGR.

The protein belongs to the SmpB family.

The protein localises to the cytoplasm. Required for rescue of stalled ribosomes mediated by trans-translation. Binds to transfer-messenger RNA (tmRNA), required for stable association of tmRNA with ribosomes. tmRNA and SmpB together mimic tRNA shape, replacing the anticodon stem-loop with SmpB. tmRNA is encoded by the ssrA gene; the 2 termini fold to resemble tRNA(Ala) and it encodes a 'tag peptide', a short internal open reading frame. During trans-translation Ala-aminoacylated tmRNA acts like a tRNA, entering the A-site of stalled ribosomes, displacing the stalled mRNA. The ribosome then switches to translate the ORF on the tmRNA; the nascent peptide is terminated with the 'tag peptide' encoded by the tmRNA and targeted for degradation. The ribosome is freed to recommence translation, which seems to be the essential function of trans-translation. The sequence is that of SsrA-binding protein from Nitrobacter winogradskyi (strain ATCC 25391 / DSM 10237 / CIP 104748 / NCIMB 11846 / Nb-255).